A 360-amino-acid chain; its full sequence is Photosystem II protein D1 (360 aa).

3 helical membrane passes run 29–46 (YIGWFGCLMFPTLLTATS), 118–133 (HFLLGVASYMGREWEL), and 142–156 (WIFVAFSAPVAAASA). Position 118 (histidine 118) interacts with chlorophyll a. Pheophytin a is bound at residue tyrosine 126. [CaMn4O5] cluster is bound by residues aspartate 170 and glutamate 189. The chain crosses the membrane as a helical span at residues 197 to 218 (FHMAGVAGVFGGSLFSAMHGSL). A chlorophyll a-binding site is contributed by histidine 198. A quinone contacts are provided by residues histidine 215 and 264-265 (SF). Residue histidine 215 coordinates Fe cation. Histidine 272 is a binding site for Fe cation. Residues 274–288 (FLALWPVLGIWLTAM) form a helical membrane-spanning segment. [CaMn4O5] cluster contacts are provided by histidine 332, glutamate 333, aspartate 342, and alanine 344. The propeptide occupies 345 to 360 (SGDVLPVAFTAPAVNA).

Belongs to the reaction center PufL/M/PsbA/D family. As to quaternary structure, PSII is composed of 1 copy each of membrane proteins PsbA, PsbB, PsbC, PsbD, PsbE, PsbF, PsbH, PsbI, PsbJ, PsbK, PsbL, PsbM, PsbT, PsbX, PsbY, PsbZ, Psb30/Ycf12, at least 3 peripheral proteins of the oxygen-evolving complex and a large number of cofactors. It forms dimeric complexes. The D1/D2 heterodimer binds P680, chlorophylls that are the primary electron donor of PSII, and subsequent electron acceptors. It shares a non-heme iron and each subunit binds pheophytin, quinone, additional chlorophylls, carotenoids and lipids. D1 provides most of the ligands for the Mn4-Ca-O5 cluster of the oxygen-evolving complex (OEC). There is also a Cl(-1) ion associated with D1 and D2, which is required for oxygen evolution. The PSII complex binds additional chlorophylls, carotenoids and specific lipids. serves as cofactor. In terms of processing, tyr-161 forms a radical intermediate that is referred to as redox-active TyrZ, YZ or Y-Z. Post-translationally, C-terminally processed by CTPA; processing is essential to allow assembly of the oxygen-evolving complex and thus photosynthetic growth.

Its subcellular location is the plastid. The protein resides in the chloroplast thylakoid membrane. It catalyses the reaction 2 a plastoquinone + 4 hnu + 2 H2O = 2 a plastoquinol + O2. Functionally, photosystem II (PSII) is a light-driven water:plastoquinone oxidoreductase that uses light energy to abstract electrons from H(2)O, generating O(2) and a proton gradient subsequently used for ATP formation. It consists of a core antenna complex that captures photons, and an electron transfer chain that converts photonic excitation into a charge separation. The D1/D2 (PsbA/PsbD) reaction center heterodimer binds P680, the primary electron donor of PSII as well as several subsequent electron acceptors. In Thalassiosira pseudonana (Marine diatom), this protein is Photosystem II protein D1.